The following is a 719-amino-acid chain: T-cell immunomodulatory protein homolog (719 aa).

The signal sequence occupies residues 1 to 32 (MYNFLSCKKKSIILQVLLIICTYNILLNFVNI). Topologically, residues 33-677 (FVNNNEKNHK…LSVNPSKKFY (645 aa)) are extracellular. N-linked (GlcNAc...) asparagine glycans are attached at residues asparagine 144, asparagine 277, asparagine 410, asparagine 540, and asparagine 659. Residues 678–697 (SILYITLICLSVIGVLIFIL) form a helical membrane-spanning segment. The Cytoplasmic segment spans residues 698–719 (DRKEKVEDSKEELGFKSHFVIG).

The protein belongs to the TIP family.

The protein resides in the membrane. Its function is as follows. May protect the parasite against attack by the host immune system by immunomodulation. The sequence is that of T-cell immunomodulatory protein homolog from Plasmodium falciparum (isolate 3D7).